Consider the following 106-residue polypeptide: UPF0091 protein RC0354 (106 aa).

The protein belongs to the UPF0091 family.

The polypeptide is UPF0091 protein RC0354 (Rickettsia conorii (strain ATCC VR-613 / Malish 7)).